Here is a 551-residue protein sequence, read N- to C-terminus: uncharacterized protein (551 aa).

The segment covering M1–N11 has biased composition (polar residues). Disordered regions lie at residues M1–E22 and C523–H551. Over residues E12–E22 the composition is skewed to basic and acidic residues. Low complexity predominate over residues Q537–H551.

It to Synechocystis PCC 6803 sll0335 and to M.tuberculosis Rv2567.

This is an uncharacterized protein from Mycobacterium bovis (strain ATCC BAA-935 / AF2122/97).